Here is a 409-residue protein sequence, read N- to C-terminus: N-acetylglucosamine-6-phosphate deacetylase (409 aa).

Glu143 serves as a coordination point for a divalent metal cation. 154–155 (AH) serves as a coordination point for substrate. The a divalent metal cation site is built by His211 and His232. Substrate contacts are provided by residues 235–236 (NA), Arg243, and 269–272 (DGIH). Asp294 serves as the catalytic Proton donor/acceptor. 328 to 330 (LSG) contacts substrate.

Belongs to the metallo-dependent hydrolases superfamily. NagA family. The cofactor is a divalent metal cation.

The enzyme catalyses N-acetyl-D-glucosamine 6-phosphate + H2O = D-glucosamine 6-phosphate + acetate. It functions in the pathway amino-sugar metabolism; N-acetylneuraminate degradation. In terms of biological role, hydrolyzes the N-glycolyl group from N-glycolylglucosamine 6-phosphate (GlcNGc-6-P) in the N-glycolylneuraminic acid (Neu5Gc) degradation pathway. The protein is N-acetylglucosamine-6-phosphate deacetylase (AMDHD2) of Bos taurus (Bovine).